The following is a 307-amino-acid chain: UDP-3-O-acyl-N-acetylglucosamine deacetylase (307 aa).

Positions 78, 241, and 245 each coordinate Zn(2+). Residue His-268 is the Proton donor of the active site.

This sequence belongs to the LpxC family. It depends on Zn(2+) as a cofactor.

It carries out the reaction a UDP-3-O-[(3R)-3-hydroxyacyl]-N-acetyl-alpha-D-glucosamine + H2O = a UDP-3-O-[(3R)-3-hydroxyacyl]-alpha-D-glucosamine + acetate. It participates in glycolipid biosynthesis; lipid IV(A) biosynthesis; lipid IV(A) from (3R)-3-hydroxytetradecanoyl-[acyl-carrier-protein] and UDP-N-acetyl-alpha-D-glucosamine: step 2/6. Catalyzes the hydrolysis of UDP-3-O-myristoyl-N-acetylglucosamine to form UDP-3-O-myristoylglucosamine and acetate, the committed step in lipid A biosynthesis. In Paracidovorax citrulli (strain AAC00-1) (Acidovorax citrulli), this protein is UDP-3-O-acyl-N-acetylglucosamine deacetylase.